A 359-amino-acid chain; its full sequence is 3-dehydroquinate synthase (359 aa).

NAD(+) contacts are provided by residues 72–77, 106–110, 130–131, Lys143, Lys152, and 170–173; these read EGEIHK, GVIGD, TS, and CLKT. Positions 185, 248, and 264 each coordinate Zn(2+).

Belongs to the sugar phosphate cyclases superfamily. Dehydroquinate synthase family. Co(2+) is required as a cofactor. Requires Zn(2+) as cofactor. NAD(+) serves as cofactor.

It is found in the cytoplasm. The catalysed reaction is 7-phospho-2-dehydro-3-deoxy-D-arabino-heptonate = 3-dehydroquinate + phosphate. It participates in metabolic intermediate biosynthesis; chorismate biosynthesis; chorismate from D-erythrose 4-phosphate and phosphoenolpyruvate: step 2/7. In terms of biological role, catalyzes the conversion of 3-deoxy-D-arabino-heptulosonate 7-phosphate (DAHP) to dehydroquinate (DHQ). In Dehalococcoides mccartyi (strain ATCC BAA-2266 / KCTC 15142 / 195) (Dehalococcoides ethenogenes (strain 195)), this protein is 3-dehydroquinate synthase.